A 124-amino-acid polypeptide reads, in one-letter code: UPF0299 membrane protein VP1300 (124 aa).

The next 4 membrane-spanning stretches (helical) occupy residues 9 to 29 (LIQL…GITI), 35 to 55 (VSVP…TLGL), 72 to 92 (MILL…MLLA), and 95 to 115 (LPII…LAWL).

The protein belongs to the UPF0299 family.

The protein resides in the cell inner membrane. This Vibrio parahaemolyticus serotype O3:K6 (strain RIMD 2210633) protein is UPF0299 membrane protein VP1300.